Here is a 231-residue protein sequence, read N- to C-terminus: GSK-3-binding protein FRAT2 (231 aa).

Disordered stretches follow at residues 1–24 (MPCRREEEEEAGDEAEGEEDDDSF) and 53–109 (DTAH…PGAV). The span at 7-23 (EEEEAGDEAEGEEDDDS) shows a compositional bias: acidic residues. The involved in GSK-3 binding stretch occupies residues 172 to 194 (DPHRLLQQLVLSGNLIKEAVRRL). The disordered stretch occupies residues 203-231 (ATSPASAPGSGGGRSGPDSVTLQPSGAWL).

The protein belongs to the GSK-3-binding protein family. As to quaternary structure, binds GSK-3 and prevents GSK-3-dependent phosphorylation.

Its function is as follows. Positively regulates the Wnt signaling pathway by stabilizing beta-catenin through the association with GSK-3. In Mus musculus (Mouse), this protein is GSK-3-binding protein FRAT2 (Frat2).